We begin with the raw amino-acid sequence, 501 residues long: Acetylcholine receptor subunit beta (501 aa).

A signal peptide spans 1 to 23; it reads MALGALLLLLGVLGTPLAPGARG. Over 24-244 the chain is Extracellular; sequence SEAEGQLIKK…VIFYLIIRRK (221 aa). A disulfide bridge connects residues Cys-151 and Cys-165. Asn-164 is a glycosylation site (N-linked (GlcNAc...) asparagine). The next 3 membrane-spanning stretches (helical) occupy residues 245–269, 277–295, and 311–332; these read PLFYLVNVIAPCILITLLAIFVFYL, MGLSIFALLTLTVFLLLLA, and YLMFTMVLVTFSVILSVVVLNL. Residues 333–469 lie on the Cytoplasmic side of the membrane; sequence HHRSPHTHQM…WQFVAMVVDR (137 aa). Residues 362-382 are disordered; the sequence is RPKPERDQLPEPHHSLSPRSG. Residues 363-375 show a composition bias toward basic and acidic residues; sequence PKPERDQLPEPHH. Tyr-390 is subject to Phosphotyrosine; by Tyr-kinases. Residues 470–488 traverse the membrane as a helical segment; sequence LFLWTFIVFTSVGTLVIFL.

Belongs to the ligand-gated ion channel (TC 1.A.9) family. Acetylcholine receptor (TC 1.A.9.1) subfamily. Beta-1/CHRNB1 sub-subfamily. Pentamer of two alpha chains, and one each of the beta, delta, and gamma (in immature muscle) or epsilon (in mature muscle) chains. The muscle heteropentamer composed of alpha-1, beta-1, delta, epsilon subunits interacts with the alpha-conotoxin ImII.

The protein resides in the postsynaptic cell membrane. It localises to the cell membrane. It carries out the reaction K(+)(in) = K(+)(out). It catalyses the reaction Na(+)(in) = Na(+)(out). In terms of biological role, after binding acetylcholine, the AChR responds by an extensive change in conformation that affects all subunits and leads to opening of an ion-conducting channel across the plasma membrane. In Mus musculus (Mouse), this protein is Acetylcholine receptor subunit beta (Chrnb1).